The primary structure comprises 841 residues: MSAQSLPAATPPTQKPPRIIRPRPPSRSRAAQSPGPPHNGSSPQELPRNSNDAPTPMCTPIFWEPPAASLKPPALLPPSASRASLDSQTSPDSPSSTPTPSPVSRRSASPEPAPRSPVPPPKPSGSPCTPLLPMAGVLAQNGSASAPGTVRRLAGRFEGGAEGRAQDADAPEPGLQARADVNGEREAPLTGSGSQENGAPDAGLACPPCCPCVCHTTRPGLELRWVPVGGYEEVPRVPRRASPLRTSRSRPHPPSIGHPAVVLTSYRSTAERKLLPLLKPPKPTRVRQDATIFGDPPQPDLDLLSEDGIQTGDSPDEAPQNTPPATVEGREEEGLEVLKEQNWELPLQDEPLYQTYRAAVLSEELWGVGEDGSPSPANAGDAPTFPRPPGPRNTLWQELPAVQASGLLDTLSPQERRMQESLFEVVTSEASYLRSLRLLTDTFVLSQALRDTLTPRDHHTLFSNVQRVQGVSERFLATLLSRVRSSPHISDLCDVVHAHAVGPFSVYVDYVRNQQYQEETYSRLMDTNVRFSAELRRLQSLPKCERLPLPSFLLLPFQRITRLRMLLQNILRQTEEGSSRQENAQKALGAVSKIIERCSAEVGRMKQTEELIRLTQRLRFHKVKALPLVSWSRRLEFQGELTELGCRRGGVLFASRPRFTPLCLLLFSDLLLITQPKSGQRLQVLDYAHRSLVQAQQVPDPSGPPTFRLSLLSNHQGRPTHRLLQASSLSDMQRWLGAFPTPGPLPCSPDTIYEDCDCSQELCSESSAPAKTEGRSLESRAAPKHLHKTPEGWLKGLPGAFPAQLVCEVTGEHERRRHLRQNQRLLEAVGSSSGTPNAPPP.

3 disordered regions span residues 1-179 (MSAQ…QARA), 239-261 (RRASPLRTSRSRPHPPSIGHPAV), and 279-333 (KPPK…REEE). Over residues 39-53 (NGSSPQELPRNSNDA) the composition is skewed to polar residues. Over residues 65 to 110 (PPAASLKPPALLPPSASRASLDSQTSPDSPSSTPTPSPVSRRSASP) the composition is skewed to low complexity. Residues S107 and S109 each carry the phosphoserine modification. A compositionally biased stretch (pro residues) spans 111–124 (EPAPRSPVPPPKPS). Y353 carries the phosphotyrosine; by EPHB2 modification. A DH domain is found at 417-601 (RMQESLFEVV…SKIIERCSAE (185 aa)). A disordered region spans residues 765–793 (ESSAPAKTEGRSLESRAAPKHLHKTPEGW).

Interacts with EPHB2. Interacts with EPHA4. Phosphorylated on tyrosine residues upon EFNA1 stimulation. EPHB2-dependent phosphorylation at Tyr-353 triggers UBE3A-mediated ubiquitination. In terms of processing, ubiquitinated; UBE3A-mediated ubiquitination and degradation by the proteasome promotes EFNB1-dependent synapse formation. Expressed in the vascular smooth muscle of coronary artery.

It localises to the cell projection. The protein resides in the dendrite. Functionally, specific GEF for RhoA activation. Does not activate RAC1 or CDC42. Regulates vascular smooth muscle contractility. Negatively regulates excitatory synapse development by suppressing the synapse-promoting activity of EPHB2. The sequence is that of Rho guanine nucleotide exchange factor 15 (ARHGEF15) from Homo sapiens (Human).